The following is a 132-amino-acid chain: MGITKRGAAWEWLHSWWMLFIFMPFAITSFFAFLFIGIKVRNRKWIMYGIIYFFIFAFGFVLPDLPGVFIVVPLWAVTIIHGFKVRPLYLIQLDVYKDHVEARAFAEARSEAESRFHAPKQSIQDIHIRKEQ.

The next 3 helical transmembrane spans lie at M18–I38, I50–I70, and V71–I91.

The protein localises to the cell membrane. This is an uncharacterized protein from Bacillus subtilis (strain 168).